The chain runs to 284 residues: RNA polymerase sigma factor RpoH (284 aa).

Residues 54–123 (MVLAHLRFVV…IHEFILRNWR (70 aa)) are sigma-70 factor domain-2. The Interaction with polymerase core subunit RpoC signature appears at 78–81 (DLIQ). The tract at residues 229 to 280 (ALEGLDERSRDILQQRWLSEEKATLHDLAEKYNVSAERIRQLEKNAMSKLKG) is sigma-70 factor domain-4. The segment at residues 253 to 272 (LHDLAEKYNVSAERIRQLEK) is a DNA-binding region (H-T-H motif).

The protein belongs to the sigma-70 factor family. RpoH subfamily. In terms of assembly, interacts with the RNA polymerase core enzyme.

It localises to the cytoplasm. Sigma factors are initiation factors that promote the attachment of RNA polymerase to specific initiation sites and are then released. This sigma factor is involved in regulation of expression of heat shock genes. The chain is RNA polymerase sigma factor RpoH from Pseudomonas aeruginosa (strain ATCC 15692 / DSM 22644 / CIP 104116 / JCM 14847 / LMG 12228 / 1C / PRS 101 / PAO1).